The primary structure comprises 390 residues: Queuine tRNA-ribosyltransferase (390 aa).

The active-site Proton acceptor is D92. Substrate-binding positions include 92–96, D146, Q195, and G222; that span reads DSGGF. Positions 253–259 are RNA binding; it reads GVGTPED. D272 (nucleophile) is an active-site residue. Residues 277–281 are RNA binding; important for wobble base 34 recognition; it reads TRNAR. 4 residues coordinate Zn(2+): C310, C312, C315, and H354.

The protein belongs to the queuine tRNA-ribosyltransferase family. In terms of assembly, homodimer. Within each dimer, one monomer is responsible for RNA recognition and catalysis, while the other monomer binds to the replacement base PreQ1. Requires Zn(2+) as cofactor.

The enzyme catalyses 7-aminomethyl-7-carbaguanine + guanosine(34) in tRNA = 7-aminomethyl-7-carbaguanosine(34) in tRNA + guanine. The protein operates within tRNA modification; tRNA-queuosine biosynthesis. Functionally, catalyzes the base-exchange of a guanine (G) residue with the queuine precursor 7-aminomethyl-7-deazaguanine (PreQ1) at position 34 (anticodon wobble position) in tRNAs with GU(N) anticodons (tRNA-Asp, -Asn, -His and -Tyr). Catalysis occurs through a double-displacement mechanism. The nucleophile active site attacks the C1' of nucleotide 34 to detach the guanine base from the RNA, forming a covalent enzyme-RNA intermediate. The proton acceptor active site deprotonates the incoming PreQ1, allowing a nucleophilic attack on the C1' of the ribose to form the product. After dissociation, two additional enzymatic reactions on the tRNA convert PreQ1 to queuine (Q), resulting in the hypermodified nucleoside queuosine (7-(((4,5-cis-dihydroxy-2-cyclopenten-1-yl)amino)methyl)-7-deazaguanosine). In Acidovorax ebreus (strain TPSY) (Diaphorobacter sp. (strain TPSY)), this protein is Queuine tRNA-ribosyltransferase.